Here is a 303-residue protein sequence, read N- to C-terminus: Acetaldehyde dehydrogenase (303 aa).

Cys131 serves as the catalytic Acyl-thioester intermediate. Residues 162–170 (SVGPGTRAN) and Asn273 each bind NAD(+).

It belongs to the acetaldehyde dehydrogenase family.

The enzyme catalyses acetaldehyde + NAD(+) + CoA = acetyl-CoA + NADH + H(+). In Marinomonas sp. (strain MWYL1), this protein is Acetaldehyde dehydrogenase.